A 336-amino-acid polypeptide reads, in one-letter code: MVRHHQPRKGSVAFSPRKRAAKETPRIKSWPQNDEPKLLGLAGYKVGMTHALVTDSDKNSPTNGMDVFTPVTVLEVPPVVVMGIRAYEKTSRGLKVITEVLADNLDEELSRKISLPKEYNKSEAIAKIQGVLDKTEDIKVLVHTNPKVTSVPKKKPDIFECGIGGANPEEKLNTALELLGNEVKASDILNEGQFVDAIATTKGKGFQGVVKRWGIRIQYGKAVRAGKGRHVGSIGPWTPSRTMWTVAQAGQMGYHKRTEFNKKILKIASADEVDQINPDGGFVKYGLVKNDYVLVKGSLPGPSKRLVILRQPIRPNNKSEDMPQINYISTKSKQGV.

The segment at 1–34 is disordered; sequence MVRHHQPRKGSVAFSPRKRAAKETPRIKSWPQND.

The protein belongs to the universal ribosomal protein uL3 family. Part of the 50S ribosomal subunit. Forms a cluster with proteins L14 and L24e.

Its function is as follows. One of the primary rRNA binding proteins, it binds directly near the 3'-end of the 23S rRNA, where it nucleates assembly of the 50S subunit. This chain is Large ribosomal subunit protein uL3, found in Methanobrevibacter smithii (strain ATCC 35061 / DSM 861 / OCM 144 / PS).